We begin with the raw amino-acid sequence, 263 residues long: 4-hydroxy-2-oxo-heptane-1,7-dioate aldolase (263 aa).

His45 (proton acceptor) is an active-site residue. Gln147 contacts substrate. Glu149 lines the a divalent metal cation pocket. Substrate is bound by residues Ala174 and Asp175. Position 175 (Asp175) interacts with a divalent metal cation.

This sequence belongs to the HpcH/HpaI aldolase family. In terms of assembly, homohexamer; trimer of dimers. A divalent metal cation serves as cofactor.

It catalyses the reaction 4-hydroxy-2-oxoheptanedioate = succinate semialdehyde + pyruvate. It participates in aromatic compound metabolism; 4-hydroxyphenylacetate degradation; pyruvate and succinate semialdehyde from 4-hydroxyphenylacetate: step 7/7. Functionally, catalyzes the reversible retro-aldol cleavage of 4-hydroxy-2-ketoheptane-1,7-dioate (HKHD) to pyruvate and succinic semialdehyde. The protein is 4-hydroxy-2-oxo-heptane-1,7-dioate aldolase of Salmonella heidelberg (strain SL476).